The sequence spans 217 residues: Probable GTP-binding protein EngB (217 aa).

In terms of domain architecture, EngB-type G spans 29–213 (GPLEVAFAGR…RQAIAETVGI (185 aa)). Residues 37-44 (GRSNVGKS), 64-68 (GRTQE), 91-94 (DMPG), 158-161 (TKTD), and 192-194 (TSS) each bind GTP. Mg(2+) contacts are provided by serine 44 and threonine 66.

Belongs to the TRAFAC class TrmE-Era-EngA-EngB-Septin-like GTPase superfamily. EngB GTPase family. Mg(2+) serves as cofactor.

In terms of biological role, necessary for normal cell division and for the maintenance of normal septation. The sequence is that of Probable GTP-binding protein EngB from Rhizobium johnstonii (strain DSM 114642 / LMG 32736 / 3841) (Rhizobium leguminosarum bv. viciae).